We begin with the raw amino-acid sequence, 208 residues long: Thiamine-phosphate synthase (208 aa).

4-amino-2-methyl-5-(diphosphooxymethyl)pyrimidine is bound by residues 37–39 (QVR) and N70. Mg(2+) contacts are provided by D71 and D90. T109 is a binding site for 4-amino-2-methyl-5-(diphosphooxymethyl)pyrimidine. 135–137 (TTS) contributes to the 2-[(2R,5Z)-2-carboxy-4-methylthiazol-5(2H)-ylidene]ethyl phosphate binding site. K138 is a binding site for 4-amino-2-methyl-5-(diphosphooxymethyl)pyrimidine. A166 is a binding site for 2-[(2R,5Z)-2-carboxy-4-methylthiazol-5(2H)-ylidene]ethyl phosphate.

It belongs to the thiamine-phosphate synthase family. Requires Mg(2+) as cofactor.

The catalysed reaction is 2-[(2R,5Z)-2-carboxy-4-methylthiazol-5(2H)-ylidene]ethyl phosphate + 4-amino-2-methyl-5-(diphosphooxymethyl)pyrimidine + 2 H(+) = thiamine phosphate + CO2 + diphosphate. It carries out the reaction 2-(2-carboxy-4-methylthiazol-5-yl)ethyl phosphate + 4-amino-2-methyl-5-(diphosphooxymethyl)pyrimidine + 2 H(+) = thiamine phosphate + CO2 + diphosphate. The enzyme catalyses 4-methyl-5-(2-phosphooxyethyl)-thiazole + 4-amino-2-methyl-5-(diphosphooxymethyl)pyrimidine + H(+) = thiamine phosphate + diphosphate. It functions in the pathway cofactor biosynthesis; thiamine diphosphate biosynthesis; thiamine phosphate from 4-amino-2-methyl-5-diphosphomethylpyrimidine and 4-methyl-5-(2-phosphoethyl)-thiazole: step 1/1. Functionally, condenses 4-methyl-5-(beta-hydroxyethyl)thiazole monophosphate (THZ-P) and 2-methyl-4-amino-5-hydroxymethyl pyrimidine pyrophosphate (HMP-PP) to form thiamine monophosphate (TMP). The polypeptide is Thiamine-phosphate synthase (Salinispora tropica (strain ATCC BAA-916 / DSM 44818 / JCM 13857 / NBRC 105044 / CNB-440)).